We begin with the raw amino-acid sequence, 549 residues long: Glucose-6-phosphate isomerase (549 aa).

Glu-355 acts as the Proton donor in catalysis. Active-site residues include His-387 and Lys-515.

The protein belongs to the GPI family.

The protein localises to the cytoplasm. The enzyme catalyses alpha-D-glucose 6-phosphate = beta-D-fructose 6-phosphate. It functions in the pathway carbohydrate biosynthesis; gluconeogenesis. The protein operates within carbohydrate degradation; glycolysis; D-glyceraldehyde 3-phosphate and glycerone phosphate from D-glucose: step 2/4. Its function is as follows. Catalyzes the reversible isomerization of glucose-6-phosphate to fructose-6-phosphate. The sequence is that of Glucose-6-phosphate isomerase from Haemophilus influenzae (strain PittEE).